The primary structure comprises 466 residues: Methylenomycin A resistance protein (466 aa).

14 consecutive transmembrane segments (helical) span residues 16-36, 56-76, 83-103, 113-133, 146-166, 168-188, 203-223, 234-254, 276-296, 305-325, 337-357, 367-387, 409-429, and 434-454; these read ISVL…VTVV, WVVD…GALA, TIYI…AASI, LIQG…LAAS, LWAA…GVLV, LAGW…ALIS, VNII…YALI, VILV…LREI, FIGF…SLFL, FMAG…NLLF, LMFV…VLIS, VLMS…TTVI, IGAL…ATWY, and FAFL…WLFL.

The protein belongs to the major facilitator superfamily. EmrB family.

It localises to the cell membrane. Functionally, resistance to the epoxide antibiotic methylenomycin. The sequence is that of Methylenomycin A resistance protein (mmr) from Bacillus subtilis (strain 168).